The sequence spans 748 residues: Ribonucleoprotein PTB-binding 1 (748 aa).

Residues 1–42 (MAADVSVTHRPPLSPEAEAEAETPETVDRRTPEQELPPLDPE) are disordered. At A2 the chain carries N-acetylalanine. 2 positions are modified to phosphoserine: S6 and S14. Residue T31 is modified to Phosphothreonine. The short motif at 45–60 (RKRLEHTERQFRNRRK) is the Nuclear localization signal element. 3 consecutive RRM domains span residues 59–130 (RKIL…LQPT), 132–210 (ALLC…WTDA), and 221–299 (RCLC…FCAP). The interval 307-401 (LAALIAAQAT…QSQSQKKPGI (95 aa)) is interaction with PTBP1. Disordered stretches follow at residues 390 to 505 (QSQS…GEPP), 525 to 647 (SNLA…PLSH), and 672 to 731 (KAVG…QHSQ). T469 is subject to Phosphothreonine. 4 positions are modified to phosphoserine: S480, S576, S626, and S630. Residues 675–685 (GSSPMGSSEGL) show a composition bias toward low complexity. Phosphoserine occurs at positions 716 and 720. The short motif at 743-746 (KRKR) is the Nuclear localization signal element.

As to quaternary structure, interacts with PTBP1, RAVER2, VCL and ACTN1. Part of a complex containing RAVER1, VCL and ACTN1. In terms of tissue distribution, ubiquitous. Detected in aorta, brain, gut, heart, kidney, liver, spleen, uterus and skeletal muscle.

It localises to the nucleus. The protein resides in the cytoplasm. Cooperates with PTBP1 to modulate regulated alternative splicing events. Promotes exon skipping. Cooperates with PTBP1 to modulate switching between mutually exclusive exons during maturation of the TPM1 pre-mRNA. The chain is Ribonucleoprotein PTB-binding 1 (Raver1) from Rattus norvegicus (Rat).